The primary structure comprises 245 residues: Chromosome partition protein MukE (245 aa).

The disordered stretch occupies residues 213 to 245; sequence PESIAAEKATADDESAVSNEEDFEYDDNQEGAE. Over residues 224 to 245 the composition is skewed to acidic residues; the sequence is DDESAVSNEEDFEYDDNQEGAE.

This sequence belongs to the MukE family. As to quaternary structure, interacts, and probably forms a ternary complex, with MukF and MukB. The complex formation is stimulated by calcium or magnesium.

The protein resides in the cytoplasm. The protein localises to the nucleoid. In terms of biological role, involved in chromosome condensation, segregation and cell cycle progression. May participate in facilitating chromosome segregation by condensation DNA from both sides of a centrally located replisome during cell division. Probably acts via its interaction with MukB and MukF. This is Chromosome partition protein MukE from Actinobacillus succinogenes (strain ATCC 55618 / DSM 22257 / CCUG 43843 / 130Z).